The following is a 708-amino-acid chain: MLRSIFDFNQRSTKMVMISHKLDLILVFIIVIGGSIFRRVSANFTVPCNGRCGGLTLPYPFGFSNGCSIRFDCSAAEKPMIGDFSVQNVTENSIFVGLSHNCTRKIEDMNPLFGENFAPTSENSFLMENCNRTTDGCSIKQKFLENVLKLKSCDATGNISCFSLDSNSSSKNSAKFFSMKTLRNSSCSLLFSSIAFESVGVNAGIALEFERVRLGWWLKGGCESGTCAANTDCTDVETPHGYAGHRCSCLDGFHGDGYTNPCQRALPECRGSKLVWRHCRSNLITIVGGTVGGAFLLAALAFFFFCKRRRSTPLRSHLSAKRLLSEAAGNSSVAFFPYKEIEKATDGFSEKQKLGIGAYGTVYRGKLQNDEWVAIKRLRHRDSESLDQVMNEIKLLSSVSHPNLVRLLGCCIEQGDPVLVYEYMPNGTLSEHLQRDRGSGLPWTLRLTVATQTAKAIAYLHSSMNPPIYHRDIKSTNILLDYDFNSKVADFGLSRLGMTESSHISTAPQGTPGYLDPQYHQCFHLSDKSDVYSFGVVLAEIITGLKVVDFTRPHTEINLAALAVDKIGSGCIDEIIDPILDLDLDAWTLSSIHTVAELAFRCLAFHSDMRPTMTEVADELEQIRLSGWIPSMSLDSPAGSLRSSDRGSERSVKQSSIGSRRVVIPQKQPDCLASVEEISDSSPISVQDPWLSAQSSPSTNTLLGNIPR.

Residues 1 to 42 (MLRSIFDFNQRSTKMVMISHKLDLILVFIIVIGGSIFRRVSA) form the signal peptide. N-linked (GlcNAc...) asparagine glycosylation is found at Asn43, Asn88, Asn101, Asn131, Asn158, Asn167, and Asn184. Residues 43–285 (NFTVPCNGRC…WRHCRSNLIT (243 aa)) lie on the Extracellular side of the membrane. A helical transmembrane segment spans residues 286–306 (IVGGTVGGAFLLAALAFFFFC). The Cytoplasmic portion of the chain corresponds to 307-708 (KRRRSTPLRS…TNTLLGNIPR (402 aa)). A Protein kinase domain is found at 348–629 (FSEKQKLGIG…LEQIRLSGWI (282 aa)). Residues 354-362 (LGIGAYGTV) and Lys376 each bind ATP. Asp472 acts as the Proton acceptor in catalysis. Disordered stretches follow at residues 636–659 (SPAGSLRSSDRGSERSVKQSSIGS) and 686–708 (VQDPWLSAQSSPSTNTLLGNIPR). Basic and acidic residues predominate over residues 643 to 652 (SSDRGSERSV). Over residues 692-708 (SAQSSPSTNTLLGNIPR) the composition is skewed to polar residues.

This sequence belongs to the protein kinase superfamily. Ser/Thr protein kinase family.

Its subcellular location is the membrane. It catalyses the reaction L-seryl-[protein] + ATP = O-phospho-L-seryl-[protein] + ADP + H(+). The catalysed reaction is L-threonyl-[protein] + ATP = O-phospho-L-threonyl-[protein] + ADP + H(+). Serine/threonine-protein kinase that may function as a signaling receptor of extracellular matrix component. The chain is Wall-associated receptor kinase-like 14 (WAKL14) from Arabidopsis thaliana (Mouse-ear cress).